Reading from the N-terminus, the 44-residue chain is Metallothionein-4 (44 aa).

Belongs to the metallothionein superfamily. Type 5 family.

This protein binds cations of several transition elements. Thought to be involved in metal ion homeostasis. The protein is Metallothionein-4 (MtnD) of Drosophila melanogaster (Fruit fly).